Consider the following 417-residue polypeptide: NADH-quinone oxidoreductase subunit D (417 aa).

This sequence belongs to the complex I 49 kDa subunit family. As to quaternary structure, NDH-1 is composed of 14 different subunits. Subunits NuoB, C, D, E, F, and G constitute the peripheral sector of the complex.

The protein resides in the cell inner membrane. The catalysed reaction is a quinone + NADH + 5 H(+)(in) = a quinol + NAD(+) + 4 H(+)(out). In terms of biological role, NDH-1 shuttles electrons from NADH, via FMN and iron-sulfur (Fe-S) centers, to quinones in the respiratory chain. The immediate electron acceptor for the enzyme in this species is believed to be ubiquinone. Couples the redox reaction to proton translocation (for every two electrons transferred, four hydrogen ions are translocated across the cytoplasmic membrane), and thus conserves the redox energy in a proton gradient. This is NADH-quinone oxidoreductase subunit D from Burkholderia thailandensis (strain ATCC 700388 / DSM 13276 / CCUG 48851 / CIP 106301 / E264).